A 262-amino-acid chain; its full sequence is Type III pantothenate kinase (262 aa).

9–16 (DAGNSRIK) lines the ATP pocket. Substrate is bound by residues Tyr-96 and 103-106 (GSDR). Asp-105 serves as the catalytic Proton acceptor. Thr-129 is an ATP binding site. Thr-189 contributes to the substrate binding site.

Belongs to the type III pantothenate kinase family. In terms of assembly, homodimer. Requires NH4(+) as cofactor. K(+) serves as cofactor.

It is found in the cytoplasm. The catalysed reaction is (R)-pantothenate + ATP = (R)-4'-phosphopantothenate + ADP + H(+). The protein operates within cofactor biosynthesis; coenzyme A biosynthesis; CoA from (R)-pantothenate: step 1/5. In terms of biological role, catalyzes the phosphorylation of pantothenate (Pan), the first step in CoA biosynthesis. This Burkholderia multivorans (strain ATCC 17616 / 249) protein is Type III pantothenate kinase.